A 246-amino-acid polypeptide reads, in one-letter code: uncharacterized protein (246 aa).

A signal peptide spans 1–30 (MKKKQVSHAIIISVMLSFVIAVFHTIHASE).

This is an uncharacterized protein from Bacillus subtilis (strain 168).